The primary structure comprises 376 residues: Nucleoside diphosphate kinase homolog 7 (376 aa).

Residues 3 to 91 form the DM10 domain; that stretch reads HSERFVFIAE…YTARQLGSRK (89 aa).

This sequence belongs to the NDK family. As to quaternary structure, component of sperm flagellar doublet microtubules. Component of the gamma-tubulin ring complex. In terms of processing, undergoes autophosphorylation. In terms of tissue distribution, expressed in airway epithelial cells.

The protein localises to the cytoplasm. It localises to the cytoskeleton. It is found in the microtubule organizing center. Its subcellular location is the centrosome. The protein resides in the nucleus. The protein localises to the spindle. It localises to the cilium axoneme. It is found in the flagellum axoneme. Its subcellular location is the cell projection. The protein resides in the cilium. Its function is as follows. Possesses an intrinsic kinase activity. Displays 3'-5' exonuclease activity with a preference for single-stranded DNA. Does not seem to have nucleoside diphosphate kinase activity. Functional component of the gamma-tubulin ring complex, implicated in the regulation of the microtubule-nucleating activity of the gamma-tubulin ring complex in centrosomes, in a kinase activity-dependent manner. Part of the dynein-decorated doublet microtubules (DMTs) in cilia axoneme, which is required for motile cilia beating. This chain is Nucleoside diphosphate kinase homolog 7, found in Homo sapiens (Human).